A 96-amino-acid polypeptide reads, in one-letter code: Integration host factor subunit beta (96 aa).

Residues 59–86 are disordered; sequence RVGRNPKTGETVELDGKHVPHFKPGKEL. Over residues 72–86 the composition is skewed to basic and acidic residues; sequence LDGKHVPHFKPGKEL.

It belongs to the bacterial histone-like protein family. As to quaternary structure, heterodimer of an alpha and a beta chain.

Its function is as follows. This protein is one of the two subunits of integration host factor, a specific DNA-binding protein that functions in genetic recombination as well as in transcriptional and translational control. The polypeptide is Integration host factor subunit beta (Pseudoalteromonas atlantica (strain T6c / ATCC BAA-1087)).